The primary structure comprises 639 residues: C-type lectin domain-containing protein 160 (639 aa).

A signal peptide spans 1–19 (MDLKSWILLSCTLLPLSVT). VWFA domains are found at residues 31 to 178 (DIII…VGIG) and 289 to 474 (DIIF…LCQV). The 128-residue stretch at 491 to 618 (KYGECFFPTK…WNSVSCTSEY (128 aa)) folds into the C-type lectin domain. An intrachain disulfide couples Cys-594 to Cys-614.

It is found in the secreted. In Caenorhabditis elegans, this protein is C-type lectin domain-containing protein 160 (clec-160).